The chain runs to 702 residues: Solute carrier organic anion transporter family member 1B3 (702 aa).

Topologically, residues 1 to 28 (MDQHQHLNKTAESASSEKKKTRRCNGFK) are cytoplasmic. Residues 29-48 (MFLAALSFSYIAKALGGIIM) traverse the membrane as a helical segment. Residues 49 to 67 (KISITQIERRFDISSSLAG) lie on the Extracellular side of the membrane. Residues 68–88 (LIDGSFEIGNLLVIVFVSYFG) form a helical membrane-spanning segment. The Cytoplasmic portion of the chain corresponds to 89 to 94 (SKLHRP). A helical membrane pass occupies residues 95–119 (KLIGIGCLLMGTGSILTSLPHFFMG). Over 120–168 (YYRYSKETHINPSENSTSSLSTCLINQTLSFNGTSPEIVEKDCVKESGS) the chain is Extracellular. Asn134, Asn145, and Asn151 each carry an N-linked (GlcNAc...) asparagine glycan. A helical membrane pass occupies residues 169–197 (HMWIYVFMGNMLRGIGETPIVPLGISYID). Residues 198–216 (DFAKEGHSSLYLGSLNAIG) are Cytoplasmic-facing. The helical transmembrane segment at 217–237 (MIGPVIGFALGSLFAKMYVDI) threads the bilayer. Over 238-255 (GYVDLSTIRITPKDSRWV) the chain is Extracellular. A helical membrane pass occupies residues 256–280 (GAWWLGFLVSGLFSIISSIPFFFLP). Residues 281–331 (KNPNKPQKERKISLSLHVLKTNDDRNQTANLTNQGKNVTKNVTGFFQSLKS) lie on the Cytoplasmic side of the membrane. Residues Ser293 and Ser295 each carry the phosphoserine modification. Residues 332 to 353 (ILTNPLYVIFLLLTLLQVSSFI) form a helical membrane-spanning segment. Residues 354 to 373 (GSFTYVFKYMEQQYGQSASH) lie on the Extracellular side of the membrane. Residues 374–397 (ANFLLGIITIPTVATGMFLGGFII) traverse the membrane as a helical segment. Topologically, residues 398 to 401 (KKFK) are cytoplasmic. A helical transmembrane segment spans residues 402–425 (LSLVGIAKFSFLTSMISFLFQLLY). The Extracellular portion of the chain corresponds to 426–537 (FPLICESKSV…NTCTRKFFIY (112 aa)). Asn445 carries an N-linked (GlcNAc...) asparagine glycan. The 56-residue stretch at 453–508 (DVPLSYCNSECNCDESQWEPVCGNNGITYLSPCLAGCKSSSGIKKHTVFYNCSCVE) folds into the Kazal-like domain. 3 disulfides stabilise this stretch: Cys459–Cys489, Cys465–Cys485, and Cys474–Cys506. N-linked (GlcNAc...) asparagine glycosylation is found at Asn503 and Asn516. A helical transmembrane segment spans residues 538–560 (VAIQVINSLFSATGGTTFILLTV). Residues 561–569 (KIVQPELKA) are Cytoplasmic-facing. The chain crosses the membrane as a helical span at residues 570 to 595 (LAMGFQSMVIRTLGGILAPIYFGALI). Residues 596-629 (DKTCMKWSTNSCGAQGACRIYNSVFFGRVYLGLS) lie on the Extracellular side of the membrane. Residues 630 to 647 (IALRFPALVLYIVFIFAM) form a helical membrane-spanning segment. Residues 648–695 (KKKFQGKDTKASDNERKVMDEANLEFLNNGEHFVPSAGTDSKTCNLDM) lie on the Cytoplasmic side of the membrane. Ser683 bears the Phosphoserine mark.

Belongs to the organo anion transporter (TC 2.A.60) family. Post-translationally, N-glycosylated. Highly expressed in liver, in particular at the basolateral membrane of hepatocytes near the central vein. Expressed in the placenta. In testis, primarily localized to the basal membrane of Sertoli cells and weakly expressed in Leydig cells and within the tubules.

It is found in the basolateral cell membrane. The protein resides in the basal cell membrane. It carries out the reaction estrone 3-sulfate(out) + hydrogencarbonate(in) = estrone 3-sulfate(in) + hydrogencarbonate(out). The catalysed reaction is 17beta-estradiol 17-O-(beta-D-glucuronate)(out) = 17beta-estradiol 17-O-(beta-D-glucuronate)(in). It catalyses the reaction taurocholate(out) = taurocholate(in). The enzyme catalyses estrone 3-sulfate(out) = estrone 3-sulfate(in). It carries out the reaction dehydroepiandrosterone 3-sulfate(out) = dehydroepiandrosterone 3-sulfate(in). The catalysed reaction is leukotriene C4(out) = leukotriene C4(in). It catalyses the reaction L-thyroxine(out) = L-thyroxine(in). The enzyme catalyses prostaglandin E2(out) = prostaglandin E2(in). It carries out the reaction (4E,15E)-bilirubin IXalpha C8-beta-D-glucuronoside(out) = (4E,15E)-bilirubin IXalpha C8-beta-D-glucuronoside(in). The catalysed reaction is bilirubin IXalpha bis-beta-D-glucuronoside(out) = bilirubin IXalpha bis-beta-D-glucuronoside(in). In terms of biological role, mediates the Na(+)-independent uptake of organic anions. Shows broad substrate specificity, can transport both organic anions such as bile acid taurocholate (cholyltaurine) and conjugated steroids (17-beta-glucuronosyl estradiol, dehydroepiandrosterone sulfate (DHEAS), and estrone 3-sulfate), as well as eicosanoid leukotriene C4, prostaglandin E2 and L-thyroxine (T4). Hydrogencarbonate/HCO3(-) acts as the probable counteranion that exchanges for organic anions. Shows a pH-sensitive substrate specificity towards sulfated steroids, taurocholate and T4 which may be ascribed to the protonation state of the binding site and leads to a stimulation of substrate transport in an acidic microenvironment. Involved in the clearance of bile acids and organic anions from the liver. Can take up bilirubin glucuronides from plasma into the liver, contributing to the detoxification-enhancing liver-blood shuttling loop. Transports coproporphyrin I and III, by-products of heme synthesis, and may be involved in their hepatic disposition. May contribute to regulate the transport of organic compounds in testes across the blood-testis-barrier. Can transport HMG-CoA reductase inhibitors (also known as statins) such as pitavastatin, a clinically important class of hypolipidemic drugs. May play an important role in plasma and tissue distribution of the structurally diverse chemotherapeutic drugs methotrexate and paclitaxel. May also transport antihypertension agents, such as the angiotensin-converting enzyme (ACE) inhibitor prodrug enalapril, and the highly selective angiotensin II AT1-receptor antagonist valsartan, in the liver. The protein is Solute carrier organic anion transporter family member 1B3 (SLCO1B3) of Homo sapiens (Human).